We begin with the raw amino-acid sequence, 84 residues long: MNSLLMITTCLILVGTVWANDGYLFDKRKRCTLECIDKTGDKNCDRNCKKEGGSFGKCSYSACWCKGLPGITPISRTPGKTCRK.

A signal peptide spans 1–19 (MNSLLMITTCLILVGTVWA). The 64-residue stretch at 20–83 (NDGYLFDKRK…ISRTPGKTCR (64 aa)) folds into the LCN-type CS-alpha/beta domain. 4 disulfide bridges follow: Cys31–Cys82, Cys35–Cys58, Cys44–Cys63, and Cys48–Cys65.

The protein belongs to the long (4 C-C) scorpion toxin superfamily. Sodium channel inhibitor family. Beta subfamily. In terms of tissue distribution, expressed by the venom gland.

The protein localises to the secreted. Functionally, beta toxins bind voltage-independently at site-4 of sodium channels (Nav) and shift the voltage of activation toward more negative potentials thereby affecting sodium channel activation and promoting spontaneous and repetitive firing. This Centruroides exilicauda (Bark scorpion) protein is Toxin Cex12.